The primary structure comprises 137 residues: Putative pre-16S rRNA nuclease (137 aa).

It belongs to the YqgF nuclease family.

The protein localises to the cytoplasm. In terms of biological role, could be a nuclease involved in processing of the 5'-end of pre-16S rRNA. This Mycoplasmopsis synoviae (strain 53) (Mycoplasma synoviae) protein is Putative pre-16S rRNA nuclease.